Here is a 1434-residue protein sequence, read N- to C-terminus: Probable ATP-dependent RNA helicase spindle-E (1434 aa).

The interval 66 to 86 is disordered; it reads VGGPSNTKRTKTLDELESDDD. Residues 127–294 form the Helicase ATP-binding domain; sequence MKAIKENPVV…FASCKSMPPV (168 aa). 140–147 contacts ATP; the sequence is GETGCGKT. A DEAH box motif is present at residues 240-243; sequence DEVH. The region spanning 354–526 is the Helicase C-terminal domain; sequence QSEQSYEEAK…SSVLKAKELD (173 aa). Positions 938-1001 constitute a Tudor domain; that stretch reads ASAITKGLQL…RLMRHELRRD (64 aa).

The protein belongs to the DEAD box helicase family. DEAH subfamily.

It localises to the cytoplasm. It carries out the reaction ATP + H2O = ADP + phosphate + H(+). Its function is as follows. Probable ATP-binding RNA helicase which plays a central role during spermatogenesis and oogenesis by repressing transposable elements and preventing their mobilization, which is essential for the germline integrity. Acts via the piRNA metabolic process, which mediates the repression of transposable elements during meiosis by forming complexes composed of piRNAs and Piwi and govern the methylation and subsequent repression of transposons. Involved in the repression of LTR retrotransposon copia. Also involved in telomere regulation by repressing specialized telomeric retroelements HeT-A, TAHRE, and TART; Drosophila telomeres being maintained by transposition of specialized telomeric retroelements. Involved in telomeric trans-silencing, a repression mechanism by which a transposon or a transgene inserted in subtelomeric heterochromatin has the capacity to repress in trans in the female germline, a homologous transposon, or transgene located in euchromatin. Involved in the repression of testis-expressed Stellate genes by the homologous Su(Ste) repeats. Required for anteroposterior and dorsoventral axis formation during oogenesis. In Drosophila grimshawi (Hawaiian fruit fly), this protein is Probable ATP-dependent RNA helicase spindle-E (spn-E).